A 416-amino-acid chain; its full sequence is Phosphoglycerate kinase (416 aa).

(2R)-3-phosphoglycerate contacts are provided by Val22, Asp23, Phe24, Asn25, Gln37, Arg38, Ser61, His62, Gly64, Arg65, Leu120, Arg121, His168, and Arg169. Residue Gly212 participates in ADP binding. CDP is bound at residue Gly212. The AMP site is built by Ala213 and Lys214. Ala213 provides a ligand contact to ATP. Ala213 contributes to the Mg(2+) binding site. Asp217 contributes to the CDP binding site. Asp217 contacts Mg(2+). AMP is bound at residue Lys218. Position 218 (Lys218) interacts with ATP. Gly236 is a binding site for ADP. Gly236 provides a ligand contact to CDP. Positions 237 and 311 each coordinate AMP. Residues Gly237 and Gly311 each coordinate ATP. CDP contacts are provided by Gly336 and Phe341. ADP is bound at residue Phe341. Position 342 (Glu342) interacts with AMP. Positions 342, 373, and 374 each coordinate ATP. Asp373 contributes to the Mg(2+) binding site.

The protein belongs to the phosphoglycerate kinase family. Monomer. The cofactor is Mg(2+). In terms of tissue distribution, expressed in all cells of the worm (at protein level), higher expression in the cells associated with the tubercles (tegumental modifications), the muscle and along the tegument.

It catalyses the reaction (2R)-3-phosphoglycerate + ATP = (2R)-3-phospho-glyceroyl phosphate + ADP. It functions in the pathway carbohydrate degradation; glycolysis; pyruvate from D-glyceraldehyde 3-phosphate: step 2/5. Its function is as follows. Involved in the seventh step in glycolysis. Catalyzes the conversion of 1,3-bisphosphoglycerate ((2R)-3-phospho-glyceroyl phosphate) to 3-phosphoglycerate ((2R)-3-phosphoglycerate) and results in the formation of ATP. Associated with the tegument to provide the energy needed for the tegumental repair resulting from immune damage. The protein is Phosphoglycerate kinase (PGK) of Schistosoma mansoni (Blood fluke).